The chain runs to 194 residues: Flagellar transcriptional regulator FlhC (194 aa).

The Zn(2+) site is built by C139, C142, C159, and C162.

Belongs to the FlhC family. In terms of assembly, heterohexamer composed of two FlhC and four FlhD subunits. Each FlhC binds a FlhD dimer, forming a heterotrimer, and a hexamer assembles by dimerization of two heterotrimers. Zn(2+) is required as a cofactor.

It localises to the cytoplasm. In terms of biological role, functions in complex with FlhD as a master transcriptional regulator that regulates transcription of several flagellar and non-flagellar operons by binding to their promoter region. Activates expression of class 2 flagellar genes, including fliA, which is a flagellum-specific sigma factor that turns on the class 3 genes. Also regulates genes whose products function in a variety of physiological pathways. This is Flagellar transcriptional regulator FlhC from Serratia marcescens.